Here is a 341-residue protein sequence, read N- to C-terminus: L-threonine 3-dehydrogenase (341 aa).

Zn(2+) is bound at residue Cys-38. Active-site charge relay system residues include Thr-40 and His-43. Zn(2+)-binding residues include His-63, Glu-64, Cys-93, Cys-96, Cys-99, and Cys-107. Residues Ile-175, Asp-195, Arg-200, 262-264 (LGI), and 286-287 (IY) each bind NAD(+).

The protein belongs to the zinc-containing alcohol dehydrogenase family. In terms of assembly, homotetramer. Zn(2+) is required as a cofactor.

The protein localises to the cytoplasm. The enzyme catalyses L-threonine + NAD(+) = (2S)-2-amino-3-oxobutanoate + NADH + H(+). It functions in the pathway amino-acid degradation; L-threonine degradation via oxydo-reductase pathway; glycine from L-threonine: step 1/2. Its function is as follows. Catalyzes the NAD(+)-dependent oxidation of L-threonine to 2-amino-3-ketobutyrate. The protein is L-threonine 3-dehydrogenase of Escherichia coli O157:H7.